A 456-amino-acid chain; its full sequence is ATP synthase subunit beta 1 (456 aa).

An ATP-binding site is contributed by 152–159 (GGAGVGKS).

Belongs to the ATPase alpha/beta chains family. In terms of assembly, F-type ATPases have 2 components, CF(1) - the catalytic core - and CF(0) - the membrane proton channel. CF(1) has five subunits: alpha(3), beta(3), gamma(1), delta(1), epsilon(1). CF(0) has three main subunits: a(1), b(2) and c(9-12). The alpha and beta chains form an alternating ring which encloses part of the gamma chain. CF(1) is attached to CF(0) by a central stalk formed by the gamma and epsilon chains, while a peripheral stalk is formed by the delta and b chains.

It is found in the cell membrane. The catalysed reaction is ATP + H2O + 4 H(+)(in) = ADP + phosphate + 5 H(+)(out). In terms of biological role, produces ATP from ADP in the presence of a proton gradient across the membrane. The catalytic sites are hosted primarily by the beta subunits. This Listeria welshimeri serovar 6b (strain ATCC 35897 / DSM 20650 / CCUG 15529 / CIP 8149 / NCTC 11857 / SLCC 5334 / V8) protein is ATP synthase subunit beta 1.